A 70-amino-acid chain; its full sequence is NAD(P)H-quinone oxidoreductase subunit L (70 aa).

The next 2 helical transmembrane spans lie at 2–22 and 39–59; these read IVAL…PIAV and LLMY…SPFA.

This sequence belongs to the complex I NdhL subunit family. NDH-1 can be composed of about 15 different subunits; different subcomplexes with different compositions have been identified which probably have different functions.

Its subcellular location is the cellular thylakoid membrane. The enzyme catalyses a plastoquinone + NADH + (n+1) H(+)(in) = a plastoquinol + NAD(+) + n H(+)(out). The catalysed reaction is a plastoquinone + NADPH + (n+1) H(+)(in) = a plastoquinol + NADP(+) + n H(+)(out). Its function is as follows. NDH-1 shuttles electrons from an unknown electron donor, via FMN and iron-sulfur (Fe-S) centers, to quinones in the respiratory and/or the photosynthetic chain. The immediate electron acceptor for the enzyme in this species is believed to be plastoquinone. Couples the redox reaction to proton translocation, and thus conserves the redox energy in a proton gradient. Cyanobacterial NDH-1 also plays a role in inorganic carbon-concentration. The polypeptide is NAD(P)H-quinone oxidoreductase subunit L (Nostoc punctiforme (strain ATCC 29133 / PCC 73102)).